The following is a 47-amino-acid chain: Defensin-like protein 1 (47 aa).

Intrachain disulfides connect Cys3-Cys47, Cys14-Cys34, Cys20-Cys41, and Cys24-Cys43.

Monomer and homodimer.

Functionally, inhibits trypsin but not chymotrypsin. This Vigna unguiculata (Cowpea) protein is Defensin-like protein 1.